Here is a 290-residue protein sequence, read N- to C-terminus: Glutamate 5-kinase (290 aa).

An ATP-binding site is contributed by K21. S60, D151, and N163 together coordinate substrate. Residue 217–223 (TGGMFTK) participates in ATP binding.

This sequence belongs to the glutamate 5-kinase family.

It is found in the cytoplasm. It carries out the reaction L-glutamate + ATP = L-glutamyl 5-phosphate + ADP. It participates in amino-acid biosynthesis; L-proline biosynthesis; L-glutamate 5-semialdehyde from L-glutamate: step 1/2. Catalyzes the transfer of a phosphate group to glutamate to form L-glutamate 5-phosphate. The sequence is that of Glutamate 5-kinase from Leptospira interrogans serogroup Icterohaemorrhagiae serovar copenhageni (strain Fiocruz L1-130).